Consider the following 408-residue polypeptide: Protein trichome birefringence-like 14 (408 aa).

The chain crosses the membrane as a helical; Signal-anchor for type II membrane protein span at residues 11 to 31 (GSVSLALIVLILLVIILLVSE). The short motif at 131 to 133 (GDS) is the GDS motif element. The short motif at 387 to 401 (DCLHWCLPGIPDTWN) is the DCXHWCLPGXXDXWN motif element.

This sequence belongs to the PC-esterase family. TBL subfamily.

It is found in the membrane. Its function is as follows. May act as a bridging protein that binds pectin and other cell wall polysaccharides. Probably involved in maintaining esterification of pectins. May be involved in the specific O-acetylation of cell wall polymers. This is Protein trichome birefringence-like 14 (TBL14) from Arabidopsis thaliana (Mouse-ear cress).